The primary structure comprises 217 residues: Small ribosomal subunit protein uS3c (217 aa).

The region spanning Val47–Ala119 is the KH type-2 domain.

It belongs to the universal ribosomal protein uS3 family. As to quaternary structure, part of the 30S ribosomal subunit.

The protein resides in the plastid. It is found in the chloroplast. The protein is Small ribosomal subunit protein uS3c (rps3) of Pinus koraiensis (Korean pine).